The primary structure comprises 153 residues: SsrA-binding protein (153 aa).

It belongs to the SmpB family.

Its subcellular location is the cytoplasm. Required for rescue of stalled ribosomes mediated by trans-translation. Binds to transfer-messenger RNA (tmRNA), required for stable association of tmRNA with ribosomes. tmRNA and SmpB together mimic tRNA shape, replacing the anticodon stem-loop with SmpB. tmRNA is encoded by the ssrA gene; the 2 termini fold to resemble tRNA(Ala) and it encodes a 'tag peptide', a short internal open reading frame. During trans-translation Ala-aminoacylated tmRNA acts like a tRNA, entering the A-site of stalled ribosomes, displacing the stalled mRNA. The ribosome then switches to translate the ORF on the tmRNA; the nascent peptide is terminated with the 'tag peptide' encoded by the tmRNA and targeted for degradation. The ribosome is freed to recommence translation, which seems to be the essential function of trans-translation. This is SsrA-binding protein from Desulforudis audaxviator (strain MP104C).